A 229-amino-acid chain; its full sequence is Large ribosomal subunit protein uL1 (229 aa).

It belongs to the universal ribosomal protein uL1 family. As to quaternary structure, part of the 50S ribosomal subunit.

In terms of biological role, binds directly to 23S rRNA. The L1 stalk is quite mobile in the ribosome, and is involved in E site tRNA release. Protein L1 is also a translational repressor protein, it controls the translation of the L11 operon by binding to its mRNA. This is Large ribosomal subunit protein uL1 from Bifidobacterium animalis subsp. lactis (strain AD011).